The sequence spans 398 residues: ATP-dependent (S)-NAD(P)H-hydrate dehydratase 1 (398 aa).

The YjeF C-terminal domain maps to 80–391 (LLRKAFQMIP…GYIGEAFELV (312 aa)). (6S)-NADPHX is bound by residues Gly187 and 240–246 (NHVEFQR). ATP-binding positions include 280–284 (KGSID) and 300–309 (GSPKRCGGQG). Position 310 (Asp310) interacts with (6S)-NADPHX.

It belongs to the NnrD/CARKD family. Mg(2+) serves as cofactor.

It is found in the cytoplasm. The enzyme catalyses (6S)-NADHX + ATP = ADP + phosphate + NADH + H(+). It catalyses the reaction (6S)-NADPHX + ATP = ADP + phosphate + NADPH + H(+). Functionally, catalyzes the dehydration of the S-form of NAD(P)HX at the expense of ATP, which is converted to ADP. Together with NAD(P)HX epimerase, which catalyzes the epimerization of the S- and R-forms, the enzyme allows the repair of both epimers of NAD(P)HX, a damaged form of NAD(P)H that is a result of enzymatic or heat-dependent hydration. This is ATP-dependent (S)-NAD(P)H-hydrate dehydratase 1 from Puccinia graminis f. sp. tritici (strain CRL 75-36-700-3 / race SCCL) (Black stem rust fungus).